The following is a 418-amino-acid chain: Serine protease inhibitor A3K (418 aa).

The N-terminal stretch at 1 to 21 (MAFIVAMGMILMAGICPAVLC) is a signal peptide. N-linked (GlcNAc...) asparagine glycans are attached at residues asparagine 39, asparagine 105, asparagine 185, and asparagine 270. The RCL stretch occupies residues 369–394 (GTEAAAATGVIGGIRKAILPAVHFNR).

Belongs to the serpin family. Expressed in liver and secreted in plasma.

It is found in the secreted. Functionally, contrapsin inhibits trypsin-like proteases. This is Serine protease inhibitor A3K (Serpina3k) from Mus musculus (Mouse).